We begin with the raw amino-acid sequence, 300 residues long: MDNLLSTEYLNTTEIYDLIQRASAFKNGNAQPGCFEDKFVANLFFENSTRTKSSFLVAEQKLGLKLIDFETSTSSVQKGESLYDTCKTLEQIGANVLVIRHSQTTYYDELKHLNIPIINAGDGSGQHPTQSLLDLMTIYEEYKTFEGLNVLICGDVKNSRVAKSNYQSLTALGAHVMFSSPDEWKDETLEAPYVDIDEVIDRIDIVMLLRVQHERHEDSEVTSFEVSQYHENFGLTQSRYDLLKDRAIIMHPAPVNRGVEIEDTLVEAPKSRIFKQMENGMYIRMAVIDHILQTEGATAK.

Residues Arg50 and Thr51 each contribute to the carbamoyl phosphate site. Lys78 is a binding site for L-aspartate. Positions 100, 127, and 130 each coordinate carbamoyl phosphate. L-aspartate contacts are provided by Arg160 and Arg210. Ala253 and Pro254 together coordinate carbamoyl phosphate.

This sequence belongs to the aspartate/ornithine carbamoyltransferase superfamily. ATCase family. Heterododecamer (2C3:3R2) of six catalytic PyrB chains organized as two trimers (C3), and six regulatory PyrI chains organized as three dimers (R2).

The catalysed reaction is carbamoyl phosphate + L-aspartate = N-carbamoyl-L-aspartate + phosphate + H(+). It participates in pyrimidine metabolism; UMP biosynthesis via de novo pathway; (S)-dihydroorotate from bicarbonate: step 2/3. Its function is as follows. Catalyzes the condensation of carbamoyl phosphate and aspartate to form carbamoyl aspartate and inorganic phosphate, the committed step in the de novo pyrimidine nucleotide biosynthesis pathway. The polypeptide is Aspartate carbamoyltransferase catalytic subunit (Staphylococcus saprophyticus subsp. saprophyticus (strain ATCC 15305 / DSM 20229 / NCIMB 8711 / NCTC 7292 / S-41)).